Consider the following 88-residue polypeptide: Small ribosomal subunit protein uS15 (88 aa).

The protein belongs to the universal ribosomal protein uS15 family. Part of the 30S ribosomal subunit. Forms a bridge to the 50S subunit in the 70S ribosome, contacting the 23S rRNA.

In terms of biological role, one of the primary rRNA binding proteins, it binds directly to 16S rRNA where it helps nucleate assembly of the platform of the 30S subunit by binding and bridging several RNA helices of the 16S rRNA. Functionally, forms an intersubunit bridge (bridge B4) with the 23S rRNA of the 50S subunit in the ribosome. In Flavobacterium johnsoniae (strain ATCC 17061 / DSM 2064 / JCM 8514 / BCRC 14874 / CCUG 350202 / NBRC 14942 / NCIMB 11054 / UW101) (Cytophaga johnsonae), this protein is Small ribosomal subunit protein uS15.